The primary structure comprises 216 residues: Deoxyribose-phosphate aldolase (216 aa).

D89 functions as the Proton donor/acceptor in the catalytic mechanism. K152 acts as the Schiff-base intermediate with acetaldehyde in catalysis. K181 acts as the Proton donor/acceptor in catalysis.

This sequence belongs to the DeoC/FbaB aldolase family. DeoC type 1 subfamily.

It is found in the cytoplasm. It catalyses the reaction 2-deoxy-D-ribose 5-phosphate = D-glyceraldehyde 3-phosphate + acetaldehyde. The protein operates within carbohydrate degradation; 2-deoxy-D-ribose 1-phosphate degradation; D-glyceraldehyde 3-phosphate and acetaldehyde from 2-deoxy-alpha-D-ribose 1-phosphate: step 2/2. Catalyzes a reversible aldol reaction between acetaldehyde and D-glyceraldehyde 3-phosphate to generate 2-deoxy-D-ribose 5-phosphate. The protein is Deoxyribose-phosphate aldolase of Clostridium tetani (strain Massachusetts / E88).